The following is a 283-amino-acid chain: Shikimate dehydrogenase (NADP(+)) (283 aa).

Shikimate-binding positions include 16–18 (SLS) and T63. K67 serves as the catalytic Proton acceptor. D79 provides a ligand contact to NADP(+). Shikimate is bound by residues N88 and D103. NADP(+) is bound by residues 128 to 132 (GAGGA) and G243.

Belongs to the shikimate dehydrogenase family. In terms of assembly, homodimer.

It catalyses the reaction shikimate + NADP(+) = 3-dehydroshikimate + NADPH + H(+). The protein operates within metabolic intermediate biosynthesis; chorismate biosynthesis; chorismate from D-erythrose 4-phosphate and phosphoenolpyruvate: step 4/7. Functionally, involved in the biosynthesis of the chorismate, which leads to the biosynthesis of aromatic amino acids. Catalyzes the reversible NADPH linked reduction of 3-dehydroshikimate (DHSA) to yield shikimate (SA). In Xanthomonas euvesicatoria pv. vesicatoria (strain 85-10) (Xanthomonas campestris pv. vesicatoria), this protein is Shikimate dehydrogenase (NADP(+)).